Reading from the N-terminus, the 525-residue chain is Keratin, type I cytoskeletal 24 (525 aa).

The interval 1-30 is disordered; sequence MSCSSRASSSRAGGSSSARVSAGGSSFSSG. A head region spans residues 1-139; sequence MSCSSRASSS…VGDGGLFSGG (139 aa). Positions 140 to 175 are coil 1A; sequence EKQTMQNLNDRLANYLDKVRALEEANTDLENKIKEW. In terms of domain architecture, IF rod spans 140 to 456; it reads EKQTMQNLND…RLLDGEGGGS (317 aa). The segment at 176-198 is linker 1; that stretch reads YDKYGPGSGDGGSGRDYSKYYSI. The tract at residues 199–290 is coil 1B; that stretch reads IEDLRNQIIA…KNHEEEMKNM (92 aa). The linker 12 stretch occupies residues 291-313; it reads QGSSGGEVTVEMNAAPGTDLTKL. A coil 2 region spans residues 314 to 452; the sequence is LNDMRAQYEE…ETYRRLLDGE (139 aa). Residues 453–525 form a tail region; sequence GGGSSFAEFG…VSSISEVKVK (73 aa). Residues 459–497 form a disordered region; it reads AEFGGRNSGSVNMGSRDLVSGDSRSGSCSGQGRDSSKTR. The span at 480-491 shows a compositional bias: polar residues; sequence DSRSGSCSGQGR.

It belongs to the intermediate filament family. In terms of assembly, heterotetramer of two type I and two type II keratins. In terms of tissue distribution, highly expressed in keratinocytes, placenta, colon and spleen. Expressed at lower level in thymus and testis.

This is Keratin, type I cytoskeletal 24 (KRT24) from Homo sapiens (Human).